Consider the following 201-residue polypeptide: tRNA (guanine-N(7)-)-methyltransferase (201 aa).

Residues E33, E58, D85, and D106 each coordinate S-adenosyl-L-methionine. The active site involves D106. Residues K110, D142, and 180-183 each bind substrate; that span reads TTYE.

This sequence belongs to the class I-like SAM-binding methyltransferase superfamily. TrmB family.

The catalysed reaction is guanosine(46) in tRNA + S-adenosyl-L-methionine = N(7)-methylguanosine(46) in tRNA + S-adenosyl-L-homocysteine. It functions in the pathway tRNA modification; N(7)-methylguanine-tRNA biosynthesis. Functionally, catalyzes the formation of N(7)-methylguanine at position 46 (m7G46) in tRNA. The polypeptide is tRNA (guanine-N(7)-)-methyltransferase (Mesomycoplasma hyopneumoniae (strain 232) (Mycoplasma hyopneumoniae)).